We begin with the raw amino-acid sequence, 292 residues long: MSMPATSTKTTKLATSLIDEYALLGWRAMLTEVNLSPKPGLVDRINCGAHKDMALEDFHRSALAIQGWLPRFIEFGACSAEMAPEAVLHGLRPIGMACEGDMFRATAGVNTHKGSIFSLGLLCAAIGRLLQLNQPVTPTTVCSTAASFCRGLTDRELRTNNSQLTAGQRLYQQLGLTGARGEAEAGYPLVINHALPHYLTLLDQGLDPELALLDTLLLLMAINGDTNVASRGGEGGLRWLQREAQTLLQKGGIRTPADLDYLRQFDRECIERNLSPGGSADLLILTWFLAQI.

It belongs to the CitG/MdcB family.

The enzyme catalyses 3'-dephospho-CoA + ATP = 2'-(5''-triphospho-alpha-D-ribosyl)-3'-dephospho-CoA + adenine. In terms of biological role, catalyzes the formation of 2-(5''-triphosphoribosyl)-3'-dephosphocoenzyme-A, the precursor of the prosthetic group of the holo-acyl carrier protein (gamma chain) of citrate lyase, from ATP and dephospho-CoA. The chain is 2-(5''-triphosphoribosyl)-3'-dephosphocoenzyme-A synthase from Escherichia coli (strain ATCC 8739 / DSM 1576 / NBRC 3972 / NCIMB 8545 / WDCM 00012 / Crooks).